The sequence spans 270 residues: A-type potassium channel modulatory protein KCNIP2 (270 aa).

A compositionally biased stretch (basic and acidic residues) spans methionine 1–aspartate 17. A disordered region spans residues methionine 1 to lysine 32. The residue at position 9 (serine 9) is a Phosphoserine. Residues cysteine 45 and cysteine 46 are each lipidated (S-palmitoyl cysteine). Positions phenylalanine 81–proline 137 constitute an EF-hand 1; degenerate domain. EF-hand domains follow at residues aspartate 140 to glycine 175, threonine 176 to methionine 211, and alanine 224 to isoleucine 259. Ca(2+) is bound by residues aspartate 153, asparagine 155, aspartate 157, serine 159, aspartate 164, aspartate 189, asparagine 191, aspartate 193, cysteine 195, glutamate 200, aspartate 237, asparagine 239, aspartate 241, and glutamate 248. The interaction with KCND2 stretch occupies residues glutamate 257 to isoleucine 270.

Belongs to the recoverin family. In terms of assembly, component of heteromultimeric potassium channels. Identified in potassium channel complexes containing KCND1, KCND2, KCND3, KCNIP1, KCNIP2, KCNIP3, KCNIP4, DPP6 and DPP10. The KCND2-KCNIP2 channel complex contains four KCND2 and four KCNIP2 subunits. Interacts with KCND2. Probably part of a complex consisting of KCNIP1, KCNIP2 isoform 3 and KCND2. At least isoform 2 and isoform 3 can self-associate to form homodimers and homotetramers. Isoform 3 interacts with KCNIP1 in a calcium-dependent manner. Interacts with KCND3; each KCNIP2 monomer interacts with two adjacent KCND3 subunits, through both the N-terminal inactivation ball of a KCND3 subunit and a C-terminal helix from the adjacent KCND3 subunit, clamping them together; this interaction modulates the channel gating kinetics. Post-translationally, palmitoylated. Palmitoylation enhances association with the plasma membrane. Expressed in brain. Colocalizes with KCND2 in excitatory neurons including cortical and hippocampal CA1 pyramidal cells. Isoform 3 is expressed in heart and in umbilical vein endothelial cells. Not expressed in fetal heart.

It is found in the cell membrane. Regulatory subunit of Kv4/D (Shal)-type voltage-gated rapidly inactivating A-type potassium channels. Modulates channel density, inactivation kinetics and rate of recovery from inactivation in a calcium-dependent and isoform-specific manner. Involved in KCND2 and KCND3 trafficking to the cell surface. May be required for the expression of I(To) currents in the heart. This is A-type potassium channel modulatory protein KCNIP2 from Homo sapiens (Human).